A 479-amino-acid polypeptide reads, in one-letter code: Preferentially expressed antigen in melanoma-like protein 7 (479 aa).

One copy of the LRR 1; degenerate repeat lies at 96–124 (MGRLKKVDFRDAQHHASLDMQDEREGRDY). The LRR 2; degenerate repeat unit spans residues 179–203 (HLCCEKLEIGAVEVSKVRNVLKFLQ). One copy of the LRR 3; degenerate repeat lies at 204–230 (PELIKELKLNTVGNLSKLAKFVPFIRK). Residues 231 to 265 (MRNLQKLMLVRTFGTRTFTQEEKQNISKIISLFCK) form an LRR 4; degenerate repeat. 5 LRR repeats span residues 266 to 291 (LSCLRHLTIDDVYFLTDQMKELLRCL), 292 to 323 (EAPLVSLKITLCQLSQSDLESFAQRWNYSQLK), 324 to 347 (HLCLRGVTLTNLDVTPLRDFLKRV), 348 to 375 (AANLQTLDLEDCRMDDSHFRTLLPALIK), and 376 to 400 (CTQLTSINLYDNDISEDVLENFLHR).

It belongs to the PRAME family. In terms of assembly, interacts with UHRF1. Seems to be specific to pluripotent tissues in the early embryo. Not detected in somatic tissues.

Its function is as follows. Promotes maintenance and self-renewal of pluripotent embryonic stem cells (ESCs), downstream of LIF/STAT3. Maintains the pluripotency state of ESCs by repressing DNA methylation through the regulation of UHRF1 stability. Mediates the proteasomal degradation of UHRF1. Is required for the establishment of the blastocyst. The chain is Preferentially expressed antigen in melanoma-like protein 7 from Mus musculus (Mouse).